A 235-amino-acid polypeptide reads, in one-letter code: 2-C-methyl-D-erythritol 4-phosphate cytidylyltransferase (235 aa).

The protein belongs to the IspD/TarI cytidylyltransferase family. IspD subfamily.

It catalyses the reaction 2-C-methyl-D-erythritol 4-phosphate + CTP + H(+) = 4-CDP-2-C-methyl-D-erythritol + diphosphate. It participates in isoprenoid biosynthesis; isopentenyl diphosphate biosynthesis via DXP pathway; isopentenyl diphosphate from 1-deoxy-D-xylulose 5-phosphate: step 2/6. Functionally, catalyzes the formation of 4-diphosphocytidyl-2-C-methyl-D-erythritol from CTP and 2-C-methyl-D-erythritol 4-phosphate (MEP). The chain is 2-C-methyl-D-erythritol 4-phosphate cytidylyltransferase from Pseudomonas fluorescens (strain SBW25).